The primary structure comprises 197 residues: Ras-like protein rasB (197 aa).

13–20 (GGGGVGKS) is a binding site for GTP. The Effector region signature appears at 35–43 (YDPTIEDSY). GTP is bound by residues 60 to 64 (DTAGQ) and 119 to 122 (NKCD). Cys-194 is modified (cysteine methyl ester). Cys-194 carries S-geranylgeranyl cysteine lipidation. The propeptide at 195–197 (LIL) is removed in mature form.

The protein belongs to the small GTPase superfamily. Ras family.

The protein resides in the cell membrane. The catalysed reaction is GTP + H2O = GDP + phosphate + H(+). With respect to regulation, alternates between an inactive form bound to GDP and an active form bound to GTP. Activated by a guanine nucleotide-exchange factor (GEF) and inactivated by a GTPase-activating protein (GAP). In terms of biological role, ras proteins bind GDP/GTP and possess intrinsic GTPase activity. This chain is Ras-like protein rasB (rasB), found in Dictyostelium discoideum (Social amoeba).